We begin with the raw amino-acid sequence, 175 residues long: COMPASS component SDC1 (175 aa).

Residues 1 to 12 (MNESENSPQHNE) show a composition bias toward polar residues. Residues 1–45 (MNESENSPQHNEVTVPMVEDTSSNADIPMEQIQREDNKNYDKHDN) form a disordered region. Residues 32–45 (IQREDNKNYDKHDN) show a composition bias toward basic and acidic residues. Positions 121–162 (QTRKYLNTNVTPHLLAGMRLIAVQQPEDPLRVLGEYLIEQSN) are DPY-30.

This sequence belongs to the dpy-30 family. As to quaternary structure, component of the Set1C/COMPASS complex which consists of SET1(2), BRE2(2), SPP1(2), SDC1(1), SHG1(1), SWD1(1), SWD2(1), and SWD3(1). Interacts directly with BRE2.

The protein resides in the nucleus. Functionally, component of the Set1C/COMPASS complex that specifically mono-, di- and trimethylates histone H3 to form H3K4me1/2/3, which subsequently plays a role in telomere length maintenance and transcription elongation regulation. COMPASS recognizes ubiquitinated H2B on one face of the nucleosome which stimulates the methylation of H3 on the opposing face. This is COMPASS component SDC1 from Saccharomyces cerevisiae (strain ATCC 204508 / S288c) (Baker's yeast).